We begin with the raw amino-acid sequence, 415 residues long: Histidine--tRNA ligase (415 aa).

This sequence belongs to the class-II aminoacyl-tRNA synthetase family. In terms of assembly, homodimer.

The protein localises to the cytoplasm. It carries out the reaction tRNA(His) + L-histidine + ATP = L-histidyl-tRNA(His) + AMP + diphosphate + H(+). The chain is Histidine--tRNA ligase from Rickettsia akari (strain Hartford).